The primary structure comprises 687 residues: Chloride channel protein ClC-Ka (687 aa).

Helical transmembrane passes span 52–72 (FLMTLGVLMALISYAMNFALG), 161–181 (LFLGKVGPFVHLSVMIAAYLG), 202–222 (VAGAAVGVATVFAAPFSGVLF), and 236–256 (YWRGFFAATCGAFMFRLLAVF). Positions 259, 261, 278, and 281 each coordinate Ca(2+). 6 helical membrane-spanning segments follow: residues 282–302 (IFFFVLLGAICGVASCAYLYC), 325–345 (PLYAALAATVLASITYPPGVG), 396–416 (FTIFGTLAFFLVMKFWMLILA), 417–437 (TTIPMPAGYFLPIFIIGAAIG), 452–472 (IVAGGVINPIMPGGYALAGAA), and 486–506 (LLAFELTGQIVHALPVLMAVL). The Cytoplasmic portion of the chain corresponds to 507–687 (AANAIAQSCQ…SALTNPPPAK (181 aa)). CBS domains are found at residues 551–612 (MRRA…ARAS) and 628–686 (TEPV…PPPA).

It belongs to the chloride channel (TC 2.A.49) family. CLCNKA subfamily. In terms of assembly, homodimer. Interacts with BSND. Expressed predominantly in the kidney.

It is found in the basolateral cell membrane. The catalysed reaction is chloride(in) = chloride(out). It catalyses the reaction bromide(in) = bromide(out). The enzyme catalyses nitrate(in) = nitrate(out). It carries out the reaction iodide(out) = iodide(in). Functionally, anion-selective channel permeable to small monovalent anions with ion selectivity for chloride &gt; bromide &gt; nitrate &gt; iodide. Forms a homodimeric channel where each subunit has its own ion conduction pathway. May conduct double-barreled currents controlled by two types of gates, two fast gates that control each subunit independently and a slow common gate that opens and shuts off both subunits simultaneously. Assembles with the regulatory subunit BSND/Barttin for sorting at the basolateral plasma membrane domain and functional switch to the ion conducting state. CLCNKA:BSND channels display mostly a linear current-voltage relationship with fast gating at negative potentials. Mediates transepithelial chloride transport from the lumen to interstitial compartment along the thin ascending limb of Henle's loop, contributing to generation of hypertonic medullary interstitium as a countercurrent system to achieve urine concentration. Conducts chloride currents in the stria vascularis of the inner ear to establish the endocochlear potential necessary for normal hearing. The sequence is that of Chloride channel protein ClC-Ka (CLCNKA) from Oryctolagus cuniculus (Rabbit).